Here is a 410-residue protein sequence, read N- to C-terminus: Serine hydroxymethyltransferase (410 aa).

Residues L116 and 120–122 contribute to the (6S)-5,6,7,8-tetrahydrofolate site; that span reads GHL. Position 225 is an N6-(pyridoxal phosphate)lysine (K225).

It belongs to the SHMT family. As to quaternary structure, homodimer. It depends on pyridoxal 5'-phosphate as a cofactor.

Its subcellular location is the cytoplasm. The enzyme catalyses (6R)-5,10-methylene-5,6,7,8-tetrahydrofolate + glycine + H2O = (6S)-5,6,7,8-tetrahydrofolate + L-serine. It functions in the pathway one-carbon metabolism; tetrahydrofolate interconversion. The protein operates within amino-acid biosynthesis; glycine biosynthesis; glycine from L-serine: step 1/1. Its function is as follows. Catalyzes the reversible interconversion of serine and glycine with tetrahydrofolate (THF) serving as the one-carbon carrier. This reaction serves as the major source of one-carbon groups required for the biosynthesis of purines, thymidylate, methionine, and other important biomolecules. Also exhibits THF-independent aldolase activity toward beta-hydroxyamino acids, producing glycine and aldehydes, via a retro-aldol mechanism. This Lacticaseibacillus casei (strain BL23) (Lactobacillus casei) protein is Serine hydroxymethyltransferase.